The primary structure comprises 575 residues: Cytochrome P450 monooxygenase opaB (575 aa).

Asn6 is a glycosylation site (N-linked (GlcNAc...) asparagine). Residues 37–57 traverse the membrane as a helical segment; the sequence is FILAAILASIILLIIRNSMLS. N-linked (GlcNAc...) asparagine glycosylation is found at Asn83 and Asn242. Cys521 contacts heme.

This sequence belongs to the cytochrome P450 family. Heme is required as a cofactor.

The protein localises to the membrane. The protein operates within secondary metabolite biosynthesis. Cytochrome P450 monooxygenase; part of the gene cluster that mediates the biosynthesis of oxepinamides, derivatives of anthranilyl-containing tripeptides that share an oxepin ring and a fused pyrimidinone moiety. The nonribosomal peptide synthetase (NRPS) opaA assembles the quinazolinone core with D-Phe incorporation. The first adenylation domain (A1) of opaA loads and activates anthranilic acid whereas the second A domain (A2) is for activating of L-Phe, which is then converted to D-form by the E domain. The third A domain (A3) is responsible for L-Ile activation and the terminal condensation domain C3 for cyclization and releasing the NRPS product protuboxepin K. The cytochrome P450 monooxygenase opaB then catalyzes alone the oxepin ring formation to convert protuboxepin K into protuboxepin A. The flavoenzyme opaC installs subsequently one hydroxyl group at the oxepin ring, accompanied by double bond migration, to form 15-epi-oxepinamide E. The epimerase opaE changes the D-Phe residue back to L-form, leading to oxepinamide E, which is further methylated at the hydroxyl group at C-12 by the O-methyltransferase OpaF to yield oxepinamide F. In Aspergillus ustus, this protein is Cytochrome P450 monooxygenase opaB.